The sequence spans 190 residues: Glucose-6-phosphate isomerase (190 aa).

Histidine 89, histidine 91, glutamate 98, and histidine 137 together coordinate Fe cation.

This sequence belongs to the archaeal-type GPI family. In terms of assembly, homodimer. It depends on Fe cation as a cofactor.

It is found in the cytoplasm. It carries out the reaction alpha-D-glucose 6-phosphate = beta-D-fructose 6-phosphate. It functions in the pathway carbohydrate degradation; glycolysis; D-glyceraldehyde 3-phosphate and glycerone phosphate from D-glucose: step 2/4. Its activity is regulated as follows. Inhibited by mannose 6-phosphate, fructose 1-phosphate and fructose 1,6-bisphosphate. Its activity is also inhibited by Cobalt (II) ions &lt; EDTA &lt; nickel (II) ions &lt; zinc (II) ions &lt;&lt; cadmium (II) ions &lt; copper (II) ions. Sodium and potassium ions and manganese ions show little or no effect on activity. This chain is Glucose-6-phosphate isomerase (pgiA), found in Thermococcus litoralis.